Here is a 175-residue protein sequence, read N- to C-terminus: NADH-ubiquinone oxidoreductase chain 6 (175 aa).

5 helical membrane passes run 1-21 (MMTY…VGFS), 25-45 (SPIY…GIIM), 47-67 (FGGS…MLVV), 88-108 (TVMG…LYVL), and 149-169 (YGAW…LVIL).

Belongs to the complex I subunit 6 family. As to quaternary structure, core subunit of respiratory chain NADH dehydrogenase (Complex I) which is composed of 45 different subunits.

It localises to the mitochondrion inner membrane. It catalyses the reaction a ubiquinone + NADH + 5 H(+)(in) = a ubiquinol + NAD(+) + 4 H(+)(out). Functionally, core subunit of the mitochondrial membrane respiratory chain NADH dehydrogenase (Complex I) which catalyzes electron transfer from NADH through the respiratory chain, using ubiquinone as an electron acceptor. Essential for the catalytic activity and assembly of complex I. The chain is NADH-ubiquinone oxidoreductase chain 6 (MT-ND6) from Equus caballus (Horse).